Reading from the N-terminus, the 359-residue chain is Protein RecA (359 aa).

73-80 (GPESSGKT) provides a ligand contact to ATP.

This sequence belongs to the RecA family.

It localises to the cytoplasm. Can catalyze the hydrolysis of ATP in the presence of single-stranded DNA, the ATP-dependent uptake of single-stranded DNA by duplex DNA, and the ATP-dependent hybridization of homologous single-stranded DNAs. It interacts with LexA causing its activation and leading to its autocatalytic cleavage. This is Protein RecA from Desulfovibrio desulfuricans (strain ATCC 27774 / DSM 6949 / MB).